A 172-amino-acid chain; its full sequence is Large ribosomal subunit protein bL9 (172 aa).

The protein belongs to the bacterial ribosomal protein bL9 family.

In terms of biological role, binds to the 23S rRNA. This Chlamydia caviae (strain ATCC VR-813 / DSM 19441 / 03DC25 / GPIC) (Chlamydophila caviae) protein is Large ribosomal subunit protein bL9.